Reading from the N-terminus, the 1061-residue chain is Transmembrane protease serine 9 (1061 aa).

Over 3–31 (PAAPDLQPVPEVTKGVPVPTPDSGCCRAA) the chain is Cytoplasmic. Residues 32-52 (VTTVVAISVASLTLGVLSAFL) form a helical membrane-spanning segment. Topologically, residues 53 to 1061 (SAQGVQVEHT…LGWIGQNIRE (1009 aa)) are extracellular. The LDL-receptor class A domain occupies 155 to 192 (HCPGNAFSCQNSQCVSKENPECDDRVDCSDGSDEAQCD). 4 disulfides stabilise this stretch: C156-C168, C163-C182, C176-C191, and C230-C246. In terms of domain architecture, Peptidase S1 1 spans 205–438 (IVGGAEAAPG…LRDWILEVTS (234 aa)). Residues H245 and D294 each act as charge relay system in the active site. Disulfide bonds link C328–C395, C360–C374, and C385–C414. S389 serves as the catalytic Charge relay system. Residues 443–499 (PVVPTEAPAPITPSTPWPTSPESRVPNTTAKPTVAPTPAPLHPSTAAKPQECGARPA) are disordered. Residues 452-461 (PITPSTPWPT) are compositionally biased toward pro residues. Residues 462 to 476 (SPESRVPNTTAKPTV) show a composition bias toward low complexity. N-linked (GlcNAc...) asparagine glycosylation occurs at N469. Positions 506–738 (IVGGISAVSG…LKDWILKAMS (233 aa)) constitute a Peptidase S1 2 domain. An intrachain disulfide couples C531 to C547. H546 functions as the Charge relay system in the catalytic mechanism. N-linked (GlcNAc...) asparagine glycosylation occurs at N549. The Charge relay system role is filled by D594. 3 disulfide bridges follow: C628-C695, C660-C674, and C685-C714. Residues N640 and N665 are each glycosylated (N-linked (GlcNAc...) asparagine). The active-site Charge relay system is the S689. Residues 740–752 (DPSSTAHPHTSST) are compositionally biased toward low complexity. 2 disordered regions span residues 740 to 771 (DPSSTAHPHTSSTRLIPSQPPTTTAAGLIPEA) and 790 to 810 (LNTTLSARSTTTRRQTPAPGT). N791 carries N-linked (GlcNAc...) asparagine glycosylation. Residues 792-808 (TTLSARSTTTRRQTPAP) show a composition bias toward low complexity. A Peptidase S1 3 domain is found at 830–1060 (IVGGSAASLG…VLGWIGQNIR (231 aa)). Intrachain disulfides connect C856/C872, C951/C1017, C982/C996, and C1007/C1036.

The protein belongs to the peptidase S1 family. Proteolytically cleaved to generate 3 independent serine protease chains. The cleaved chains may remain attached to the membrane thanks to disulfide bonds. It is unclear whether cleavage always takes place.

The protein resides in the cell membrane. Its activity is regulated as follows. Inhibited by serine protease inhibitors PMSF and 4-(2-aminoethyl)benzenesulfonyl fluoride, but not by EDTA. Serase-1 and serase-2 are serine proteases that hydrolyze the peptides N-t-Boc-Gln-Ala-Arg-AMC and N-t-Boc-Gln-Gly-Arg-AMC. In contrast, N-t-Boc-Ala-Phe-Lys-AMC and N-t-Boc-Ala-Pro-Ala-AMC are not significantly hydrolyzed. This is Transmembrane protease serine 9 (Tmprss9) from Rattus norvegicus (Rat).